The following is a 243-amino-acid chain: Ribonuclease 3 (243 aa).

One can recognise an RNase III domain in the interval 10–146 (INRFRKRFDT…FIGALYLDQG (137 aa)). Glutamate 59 is a Mg(2+) binding site. The active site involves aspartate 63. The Mg(2+) site is built by aspartate 132 and glutamate 135. Glutamate 135 is an active-site residue. In terms of domain architecture, DRBM spans 172–241 (DFKTQFQEYV…AESAYKQLKQ (70 aa)). The segment covering 219 to 231 (GKGKTKKESEQRA) has biased composition (basic and acidic residues). The tract at residues 219-243 (GKGKTKKESEQRAAESAYKQLKQIK) is disordered.

This sequence belongs to the ribonuclease III family. In terms of assembly, homodimer. Mg(2+) is required as a cofactor.

It is found in the cytoplasm. The catalysed reaction is Endonucleolytic cleavage to 5'-phosphomonoester.. In terms of biological role, digests double-stranded RNA. Involved in the processing of primary rRNA transcript to yield the immediate precursors to the large and small rRNAs (23S and 16S). Processes some mRNAs, and tRNAs when they are encoded in the rRNA operon. Processes pre-crRNA and tracrRNA of type II CRISPR loci if present in the organism. This chain is Ribonuclease 3, found in Staphylococcus aureus (strain bovine RF122 / ET3-1).